Consider the following 324-residue polypeptide: UDP-N-acetylenolpyruvoylglucosamine reductase (324 aa).

Positions 39 to 220 (RTGGLAELFY…RAAMHEVALH (182 aa)) constitute an FAD-binding PCMH-type domain. Arg185 is an active-site residue. Residue Ser234 is the Proton donor of the active site. Residue Glu304 is part of the active site.

It belongs to the MurB family. It depends on FAD as a cofactor.

The protein resides in the cytoplasm. It catalyses the reaction UDP-N-acetyl-alpha-D-muramate + NADP(+) = UDP-N-acetyl-3-O-(1-carboxyvinyl)-alpha-D-glucosamine + NADPH + H(+). The protein operates within cell wall biogenesis; peptidoglycan biosynthesis. Functionally, cell wall formation. The protein is UDP-N-acetylenolpyruvoylglucosamine reductase of Bartonella bacilliformis (strain ATCC 35685 / KC583 / Herrer 020/F12,63).